We begin with the raw amino-acid sequence, 287 residues long: Complement C1q-like protein 2 (287 aa).

Residues 1-21 form the signal peptide; sequence MALGLLIAVPLLLQAAPPGAA. The disordered stretch occupies residues 65–144; it reads LSANPPPPFI…GTGGGGDTEG (80 aa). The 43-residue stretch at 76 to 118 folds into the Collagen-like domain; that stretch reads GPKGDPGRPGKPGPRGPPGEPGPPGPRGPPGEKGDSGRPGLPG. Residues 84–104 show a composition bias toward pro residues; sequence PGKPGPRGPPGEPGPPGPRGP. Residues 127–141 are compositionally biased toward gly residues; it reads GGVGVVSGGTGGGGD. The C1q domain maps to 154–287; the sequence is FSGPKIAFYV…TFSGFLLYPD (134 aa).

Forms homotrimers which can further assemble to form higher-order oligomeric complexes. Interacts with ADGRB3. May interact with ERFE. Forms heterooligomers with C1QL3 and C1QL4, when proteins are coexpressed; this interaction does not occur after secretion. Post-translationally, glycosylated, but not with N-linked glycans. As to expression, highest expression in eye, followed by placenta and brain, intermediate expression in adipose tissue and lowest expression in lymph node and testis.

The protein localises to the secreted. Functionally, may regulate the number of excitatory synapses that are formed on hippocampus neurons. Has no effect on inhibitory synapses. The sequence is that of Complement C1q-like protein 2 (C1ql2) from Mus musculus (Mouse).